The primary structure comprises 379 residues: uncharacterized protein (379 aa).

This is an uncharacterized protein from Shouchella clausii (Alkalihalobacillus clausii).